Reading from the N-terminus, the 474-residue chain is 3-isopropylmalate dehydratase large subunit (474 aa).

Residues 293-313 are disordered; sequence GTTPGQGIGITEEIPAPEDLP. The [4Fe-4S] cluster site is built by cysteine 348, cysteine 408, and cysteine 411.

This sequence belongs to the aconitase/IPM isomerase family. LeuC type 1 subfamily. As to quaternary structure, heterodimer of LeuC and LeuD. [4Fe-4S] cluster serves as cofactor.

The catalysed reaction is (2R,3S)-3-isopropylmalate = (2S)-2-isopropylmalate. The protein operates within amino-acid biosynthesis; L-leucine biosynthesis; L-leucine from 3-methyl-2-oxobutanoate: step 2/4. Catalyzes the isomerization between 2-isopropylmalate and 3-isopropylmalate, via the formation of 2-isopropylmaleate. The sequence is that of 3-isopropylmalate dehydratase large subunit from Natronomonas pharaonis (strain ATCC 35678 / DSM 2160 / CIP 103997 / JCM 8858 / NBRC 14720 / NCIMB 2260 / Gabara) (Halobacterium pharaonis).